We begin with the raw amino-acid sequence, 185 residues long: uncharacterized protein (185 aa).

This sequence belongs to the EUO family.

This is an uncharacterized protein from Chlamydia muridarum (strain MoPn / Nigg).